A 211-amino-acid chain; its full sequence is Small ribosomal subunit protein uS3 (211 aa).

The KH type-2 domain maps to Leu38–Lys106.

The protein belongs to the universal ribosomal protein uS3 family. In terms of assembly, part of the 30S ribosomal subunit. Forms a tight complex with proteins S10 and S14.

Functionally, binds the lower part of the 30S subunit head. Binds mRNA in the 70S ribosome, positioning it for translation. The chain is Small ribosomal subunit protein uS3 from Ehrlichia chaffeensis (strain ATCC CRL-10679 / Arkansas).